Here is a 375-residue protein sequence, read N- to C-terminus: tRNA-specific 2-thiouridylase MnmA (375 aa).

ATP contacts are provided by residues 12 to 19 (GMSGGVDS) and Met38. The segment at 98 to 100 (NPD) is interaction with target base in tRNA. The Nucleophile role is filled by Cys103. Cysteines 103 and 200 form a disulfide. Gly127 contributes to the ATP binding site. Residues 150-152 (KDQ) form an interaction with tRNA region. Cys200 acts as the Cysteine persulfide intermediate in catalysis. Positions 312-313 (RY) are interaction with tRNA.

This sequence belongs to the MnmA/TRMU family.

It is found in the cytoplasm. The enzyme catalyses S-sulfanyl-L-cysteinyl-[protein] + uridine(34) in tRNA + AH2 + ATP = 2-thiouridine(34) in tRNA + L-cysteinyl-[protein] + A + AMP + diphosphate + H(+). In terms of biological role, catalyzes the 2-thiolation of uridine at the wobble position (U34) of tRNA, leading to the formation of s(2)U34. The protein is tRNA-specific 2-thiouridylase MnmA of Lactobacillus johnsonii (strain CNCM I-12250 / La1 / NCC 533).